Here is a 452-residue protein sequence, read N- to C-terminus: MVSEDKIEQWKATKVIGIIGLGDMGLLYANKFTDAGWGVICCDREEYYDELKEKYASAKFELVKNGHLVSRQSDYIIYSVEASNISKIVATYGPSSKVGTIVGGQTSCKLPEIEAFEKYLPKDCDIITVHSLHGPKVNTEGQPLVIINHRSQYPESFEFVNSVMACLKSKQVYLTYEEHDKITADTQAVTHAAFLSMGSAWAKIKIYPWTLGVNKWYGGLENVKVNISLRIYSNKWHVYAGLAITNPSAHQQILQYATSATELFSLMIDNKEQELTDRLLKAKQFVFGKHTGLLLLDDTILEKYSLSKSSIGNSNNCKPVPNSHLSLLAIVDSWFQLGIDPYDHMICSTPLFRIFLGVSEYLFLKPGLLEQTIDAAIHDKSFIKDDLEFVISAREWSSVVSFANFDIYKKQFQSVQKFFEPMLPEANLIGNEMIKTILSHSSDRSAAEKRNT.

An NADP(+)-binding site is contributed by 14–43 (KVIGIIGLGDMGLLYANKFTDAGWGVICCD). Positions 14-297 (KVIGIIGLGD…GKHTGLLLLD (284 aa)) constitute a Prephenate/arogenate dehydrogenase domain.

It belongs to the prephenate/arogenate dehydrogenase family.

It catalyses the reaction prephenate + NADP(+) = 3-(4-hydroxyphenyl)pyruvate + CO2 + NADPH. The protein operates within amino-acid biosynthesis; L-tyrosine biosynthesis; (4-hydroxyphenyl)pyruvate from prephenate (NADP(+) route): step 1/1. The sequence is that of Prephenate dehydrogenase [NADP(+)] (TYR1) from Saccharomyces cerevisiae (strain ATCC 204508 / S288c) (Baker's yeast).